We begin with the raw amino-acid sequence, 89 residues long: Ragulator complex protein LAMTOR5 homolog (89 aa).

It belongs to the LAMTOR5 family. In terms of assembly, part of the Ragulator complex.

Its subcellular location is the cytoplasm. It is found in the lysosome. Functionally, regulator of the TOR pathway, a signaling cascade that promotes cell growth in response to growth factors, energy levels, and amino acids. As part of the Ragulator complex, may activate the TOR signaling cascade in response to amino acids. This chain is Ragulator complex protein LAMTOR5 homolog, found in Dictyostelium discoideum (Social amoeba).